Consider the following 303-residue polypeptide: Ribosomal RNA small subunit methyltransferase H (303 aa).

S-adenosyl-L-methionine is bound by residues 32-34 (GGH), Asp-52, Phe-78, Asp-99, and Gln-106.

Belongs to the methyltransferase superfamily. RsmH family.

The protein localises to the cytoplasm. The enzyme catalyses cytidine(1402) in 16S rRNA + S-adenosyl-L-methionine = N(4)-methylcytidine(1402) in 16S rRNA + S-adenosyl-L-homocysteine + H(+). In terms of biological role, specifically methylates the N4 position of cytidine in position 1402 (C1402) of 16S rRNA. The polypeptide is Ribosomal RNA small subunit methyltransferase H (Acinetobacter baylyi (strain ATCC 33305 / BD413 / ADP1)).